Reading from the N-terminus, the 189-residue chain is Interferon alpha-10 (189 aa).

Residues methionine 1–glycine 23 form the signal peptide. Disulfide bonds link cysteine 24/cysteine 122 and cysteine 52/cysteine 162.

This sequence belongs to the alpha/beta interferon family.

It localises to the secreted. In terms of biological role, produced by macrophages, IFN-alpha have antiviral activities. Interferon stimulates the production of two enzymes: a protein kinase and an oligoadenylate synthetase. The polypeptide is Interferon alpha-10 (IFNA10) (Homo sapiens (Human)).